Reading from the N-terminus, the 509-residue chain is Scavenger receptor class B member 1 (509 aa).

Topologically, residues 1-11 (MGNLSRARRVT) are cytoplasmic. Residues 12–32 (AALGFIGLLFAVLGIIMIVMV) form a helical membrane-spanning segment. Over 33-440 (PSIIKQQVLK…YIQLVLMPKV (408 aa)) the chain is Extracellular. Residues Asn-102, Asn-108, Asn-173, Asn-212, Asn-227, Asn-255, Asn-310, Asn-330, and Asn-383 are each glycosylated (N-linked (GlcNAc...) asparagine). A disulfide bridge links Cys-251 with Cys-384. The chain crosses the membrane as a helical span at residues 441-461 (LHYAQYVLLALGCVLLLIPII). Over 462–509 (YQIRSQEKCYLFWISFKKGSKDKEAVQAYSEFLMTSAPKGTVLQEARL) the chain is Cytoplasmic.

Belongs to the CD36 family. In terms of processing, N-glycosylated. The six cysteines of the extracellular domain are all involved in intramolecular disulfide bonds.

It localises to the cell membrane. Its subcellular location is the membrane. It is found in the caveola. Functionally, receptor for different ligands such as phospholipids, cholesterol ester, lipoproteins, phosphatidylserine and apoptotic cells. Receptor for HDL, mediating selective uptake of cholesteryl ether and HDL-dependent cholesterol efflux. Also facilitates the flux of free and esterified cholesterol between the cell surface and apoB-containing lipoproteins and modified lipoproteins, although less efficiently than HDL. May be involved in the phagocytosis of apoptotic cells, via its phosphatidylserine binding activity. In Bos taurus (Bovine), this protein is Scavenger receptor class B member 1 (SCARB1).